A 182-amino-acid chain; its full sequence is CD-NTase-associated protein 15 (182 aa).

A run of 2 helical transmembrane segments spans residues 11 to 31 (ITGWFTVIFFLLLIIVSCTVW) and 33 to 53 (IGWIDIISYTVTISTFITIGY).

This sequence belongs to the CBASS Cap15 membrane effector family. The beta barrel domain oligomerizes; in the presence of cyclic nucleotides (probably 3',2'-cGAMP) higher-level oligomers occur.

Its subcellular location is the cell membrane. Its function is as follows. Effector protein of a CBASS antivirus system. CBASS (cyclic oligonucleotide-based antiphage signaling system) provides immunity against bacteriophage. The CD-NTase protein (CdnE) synthesizes cyclic nucleotides in response to infection; these serve as specific second messenger signals. The signals activate a diverse range of effectors, leading to bacterial cell death and thus abortive phage infection. This system triggers membrane disruption without lysis. A type I-B CBASS system. Binds cyclic nucleotide second messenger 3',2'-cGAMP, probably oligomerizing, and induces cell membrane shrinkage and rupture, leading to cell death. Protects S.aureus against phage infection. When the CBASS operon (cdnE-cap15) is introduced in S.aureus strain RN4220 there is strong protection against lytic DNA phages 80alpha-vir and phi-NM1-gamma-6 but little to no protection against phages phi-NM4-gamma-4 or phi-12-gamma-3. The sequence is that of CD-NTase-associated protein 15 from Staphylococcus schleiferi.